The following is a 125-amino-acid chain: SKP1-like protein 7 (125 aa).

An interaction with the F-box domain of F-box proteins region spans residues 94 to 125 (MNAAYDLHIKSLLALAYQTVADMVNDNKWAFE).

This sequence belongs to the SKP1 family. As to quaternary structure, part of a SCF (SKP1-cullin-F-box) protein ligase complex. In terms of tissue distribution, restricted to siliques.

The protein localises to the nucleus. It functions in the pathway protein modification; protein ubiquitination. Its function is as follows. Involved in ubiquitination and subsequent proteasomal degradation of target proteins. Together with CUL1, RBX1 and a F-box protein, it forms a SCF E3 ubiquitin ligase complex. The functional specificity of this complex depends on the type of F-box protein. In the SCF complex, it serves as an adapter that links the F-box protein to CUL1. This chain is SKP1-like protein 7 (ASK7), found in Arabidopsis thaliana (Mouse-ear cress).